A 1693-amino-acid chain; its full sequence is Putative stoned B-like protein (1693 aa).

Over residues 1 to 12 the composition is skewed to basic and acidic residues; the sequence is MSWRDRDFDPHG. Disordered regions lie at residues 1–54, 222–322, 334–371, 383–438, 585–807, 841–869, and 899–1024; these read MSWR…ELPA, NQIP…VEKS, TVEI…PTFS, KEMT…DPNA, GDYH…TSAA, KKME…DEED, and PVKE…FVAD. Residues 26 to 39 are compositionally biased toward low complexity; the sequence is SSSERAASMRAMRS. Composition is skewed to basic and acidic residues over residues 279–301 and 311–322; these read MEDK…KEET and TTEKHQNEVEKS. Acidic residues predominate over residues 360–371; that stretch reads EEEEDDDLPTFS. The segment covering 393–412 has biased composition (basic and acidic residues); it reads ENVENEKQEDTHISEGHVEY. The segment covering 596–615 has biased composition (polar residues); the sequence is DENSTSAISGYEQNGASTSL. Over residues 632 to 643 the composition is skewed to low complexity; the sequence is YYQGQEYQQEYY. Residues 684-686 carry the DPF 1 motif; it reads DPF. A compositionally biased stretch (low complexity) spans 708–722; that stretch reads SPTPEASSSTGTSAP. Positions 745-760 are enriched in pro residues; the sequence is PPRPPPAARPPPPRPA. Residues 786 to 807 show a composition bias toward polar residues; that stretch reads KVSTAVKSTESTLKNLEETSAA. Residues 899–913 are compositionally biased toward basic and acidic residues; sequence PVKEIKKAPEIRRVD. Short sequence motifs (DPF) lie at residues 1006–1008, 1024–1026, and 1039–1041; these read DPF. Residues 1062 to 1095 form a disordered region; the sequence is ANAENEDDFYNGRQSPTLSTPTPEGGSPISQQRP. Polar residues predominate over residues 1073–1095; the sequence is GRQSPTLSTPTPEGGSPISQQRP. The SHD domain maps to 1136–1283; the sequence is GWDLMVRHPI…KCKITRTAKP (148 aa). The region spanning 1287–1606 is the MHD domain; sequence QDEVQIHCYD…AKYQYKVEID (320 aa). The disordered stretch occupies residues 1633–1693; it reads ELHQPTFNPS…IQIDMKNYGY (61 aa). Polar residues predominate over residues 1637–1651; it reads PTFNPSTQESDTQQG.

The protein belongs to the Stoned B family.

The protein localises to the cytoplasm. Functionally, potential adapter protein, which may be involved in endocytic vesicle recycling of synaptic vesicles. This Caenorhabditis elegans protein is Putative stoned B-like protein (unc-41).